Reading from the N-terminus, the 841-residue chain is Rho guanine nucleotide exchange factor 15 (841 aa).

3 disordered regions span residues Met-1–Ala-179, Arg-239–Val-261, and Lys-279–Glu-333. A compositionally biased stretch (polar residues) spans Asn-39–Ala-53. The segment covering Pro-65–Pro-110 has biased composition (low complexity). Phosphoserine occurs at positions 107 and 109. The span at Glu-111 to Ser-124 shows a compositional bias: pro residues. Tyr-353 is modified (phosphotyrosine; by EPHB2). Residues Arg-417 to Glu-601 enclose the DH domain. Residues Glu-765 to Trp-793 are disordered.

In terms of assembly, interacts with EPHB2. Interacts with EPHA4. In terms of processing, phosphorylated on tyrosine residues upon EFNA1 stimulation. EPHB2-dependent phosphorylation at Tyr-353 triggers UBE3A-mediated ubiquitination. Post-translationally, ubiquitinated; UBE3A-mediated ubiquitination and degradation by the proteasome promotes EFNB1-dependent synapse formation. In terms of tissue distribution, expressed in the vascular smooth muscle of coronary artery.

It is found in the cell projection. The protein resides in the dendrite. Functionally, specific GEF for RhoA activation. Does not activate RAC1 or CDC42. Regulates vascular smooth muscle contractility. Negatively regulates excitatory synapse development by suppressing the synapse-promoting activity of EPHB2. The protein is Rho guanine nucleotide exchange factor 15 (ARHGEF15) of Homo sapiens (Human).